We begin with the raw amino-acid sequence, 334 residues long: N-acetyl-gamma-glutamyl-phosphate reductase (334 aa).

Residue cysteine 154 is part of the active site.

It belongs to the NAGSA dehydrogenase family. Type 1 subfamily.

The protein localises to the cytoplasm. The enzyme catalyses N-acetyl-L-glutamate 5-semialdehyde + phosphate + NADP(+) = N-acetyl-L-glutamyl 5-phosphate + NADPH + H(+). It participates in amino-acid biosynthesis; L-arginine biosynthesis; N(2)-acetyl-L-ornithine from L-glutamate: step 3/4. Catalyzes the NADPH-dependent reduction of N-acetyl-5-glutamyl phosphate to yield N-acetyl-L-glutamate 5-semialdehyde. This chain is N-acetyl-gamma-glutamyl-phosphate reductase, found in Buchnera aphidicola subsp. Acyrthosiphon pisum (strain Tuc7).